The primary structure comprises 284 residues: MTKPDLASLEKTIDKAFDERDGINTATRGEVREAVEQSLVLLDRGEARVAEKQADGNWQVNQWLKKAVLLSFRLNPMEVIKGGPGQSSWWDKVPSKFDGWTANEFEKAGFRAVPNCIVRHSAYIAPNAILMPSFVNLGAYVDEGTMVDTWATVGSCAQIGKNVHLSGGVGIGGVLEPMQAGPTIIEDNCFIGARSEVVEGCIVREGSVLGMGVFIGKSTKIVDRATGEVFYGEVPPYSVVVAGTMPGKNVPGENWGPSLYCAVIVKRVDEKTRSKTSINELLRD.

Substrate contacts are provided by Arg-111 and Asp-148.

The protein belongs to the transferase hexapeptide repeat family. Homotrimer.

The protein localises to the cytoplasm. The enzyme catalyses (S)-2,3,4,5-tetrahydrodipicolinate + succinyl-CoA + H2O = (S)-2-succinylamino-6-oxoheptanedioate + CoA. It participates in amino-acid biosynthesis; L-lysine biosynthesis via DAP pathway; LL-2,6-diaminopimelate from (S)-tetrahydrodipicolinate (succinylase route): step 1/3. This is 2,3,4,5-tetrahydropyridine-2,6-dicarboxylate N-succinyltransferase from Brucella anthropi (strain ATCC 49188 / DSM 6882 / CCUG 24695 / JCM 21032 / LMG 3331 / NBRC 15819 / NCTC 12168 / Alc 37) (Ochrobactrum anthropi).